The sequence spans 467 residues: Phosphoglucosamine mutase (467 aa).

Residue S120 is the Phosphoserine intermediate of the active site. Residues S120, D261, D263, and D265 each coordinate Mg(2+). S120 is subject to Phosphoserine.

Belongs to the phosphohexose mutase family. Mg(2+) serves as cofactor. Activated by phosphorylation.

The catalysed reaction is alpha-D-glucosamine 1-phosphate = D-glucosamine 6-phosphate. Its function is as follows. Catalyzes the conversion of glucosamine-6-phosphate to glucosamine-1-phosphate. The protein is Phosphoglucosamine mutase of Parafrankia sp. (strain EAN1pec).